A 316-amino-acid polypeptide reads, in one-letter code: Porphobilinogen deaminase (316 aa).

C245 is subject to S-(dipyrrolylmethanemethyl)cysteine.

This sequence belongs to the HMBS family. As to quaternary structure, monomer. The cofactor is dipyrromethane.

The catalysed reaction is 4 porphobilinogen + H2O = hydroxymethylbilane + 4 NH4(+). The protein operates within porphyrin-containing compound metabolism; protoporphyrin-IX biosynthesis; coproporphyrinogen-III from 5-aminolevulinate: step 2/4. It functions in the pathway porphyrin-containing compound metabolism; chlorophyll biosynthesis. Functionally, tetrapolymerization of the monopyrrole PBG into the hydroxymethylbilane pre-uroporphyrinogen in several discrete steps. In Synechococcus sp. (strain CC9311), this protein is Porphobilinogen deaminase.